A 546-amino-acid polypeptide reads, in one-letter code: Probable malate:quinone oxidoreductase (546 aa).

The protein belongs to the MQO family. It depends on FAD as a cofactor.

The enzyme catalyses (S)-malate + a quinone = a quinol + oxaloacetate. It functions in the pathway carbohydrate metabolism; tricarboxylic acid cycle; oxaloacetate from (S)-malate (quinone route): step 1/1. This chain is Probable malate:quinone oxidoreductase, found in Acinetobacter baumannii (strain ACICU).